A 362-amino-acid polypeptide reads, in one-letter code: MNLTASVSMVYDGGHYIVVDSPSATDVHSKELMLKGIASRNIVPGEIQYVVTTHGHPDHFGQGNFFPNARHFFGSYEYSDTNFISTELHTKDIMQLTKNVQLWNTPGHTAQDVTVMVHNVSCCGIIAVAGDLFYNEEDANEAAGIWFQEAWNPIIGKISRNKVICYADYVIPGHGKLFRITQEMKNGADCFTKYETTLDDNKTVQSSPQFQNSIEQVIRKPAETLFSSANSVSFNYIGSPSTSASSSTRAIETTTAYSDSTTTTFYTVDLTAETPSTLESDIIFNSQENLPPLGMKIKKNANYIELPDLSGDVHPMVQSFAKKVSDVLKQPQNEAEISKMMPHLKKWQTTLTKLWKQYMNAN.

This is an uncharacterized protein from Caenorhabditis elegans.